The following is a 214-amino-acid chain: Late embryogenesis abundant protein At1g64065 (214 aa).

The chain crosses the membrane as a helical span at residues 41-61; the sequence is VYSLTIIVIIFALCLILSSIF.

The protein belongs to the LEA type 2 family.

Its subcellular location is the membrane. The protein is Late embryogenesis abundant protein At1g64065 of Arabidopsis thaliana (Mouse-ear cress).